Consider the following 86-residue polypeptide: Protein U17 (86 aa).

This Homo sapiens (Human) protein is Protein U17 (U17/U16).